Here is a 577-residue protein sequence, read N- to C-terminus: Proline--tRNA ligase (577 aa).

Belongs to the class-II aminoacyl-tRNA synthetase family. ProS type 1 subfamily. As to quaternary structure, homodimer.

Its subcellular location is the cytoplasm. It catalyses the reaction tRNA(Pro) + L-proline + ATP = L-prolyl-tRNA(Pro) + AMP + diphosphate. Functionally, catalyzes the attachment of proline to tRNA(Pro) in a two-step reaction: proline is first activated by ATP to form Pro-AMP and then transferred to the acceptor end of tRNA(Pro). As ProRS can inadvertently accommodate and process non-cognate amino acids such as alanine and cysteine, to avoid such errors it has two additional distinct editing activities against alanine. One activity is designated as 'pretransfer' editing and involves the tRNA(Pro)-independent hydrolysis of activated Ala-AMP. The other activity is designated 'posttransfer' editing and involves deacylation of mischarged Ala-tRNA(Pro). The misacylated Cys-tRNA(Pro) is not edited by ProRS. This chain is Proline--tRNA ligase, found in Chlamydia caviae (strain ATCC VR-813 / DSM 19441 / 03DC25 / GPIC) (Chlamydophila caviae).